The following is a 591-amino-acid chain: MSANGWFQILLFLGLILAVTKPLGVFMARVFNRERTFLDPVLRPIERLIYRCTAVDESQEMKWTEYAIAMLLFSAVSMLMLYIMQRVQLHLPFNPQKFGAVDPAHLAFNTAASFTTNTNWQAYSGEAVMSYFTQMAGLAYHNFMSAAVGIAIAIAFIRGIARRQSETIGNFWVDMTRAVLWVLLPFCIMGALALVSQGVVQNLKPYDTVKLVEPQQVTTTGADGKSSTQTITTQTIAQGPVASQEIIKEWGTNGGGFFNANSSHPYENPTPLSNLIEMFSIFAISAGLTYTLGRMTGSQRHGWAVWGAMAALFLVGVSVVYWAEASGNPLLAGVDQHTSAMQAGGNMEGKEVRFGIANTALFATITTDASCGAINGWHDSFTPLGGMVPLVNIMLSEVIFGGVGAGMYGMLIYIVLAVFIAGLMVGRTPEYLGKKIEAYDVKMAMLVALIFPLIILVFSAISSVKTFGTGSILNPGPHGLSEILYAFVSGTGNNGSAFGGLTVNTPWYDVAIGIAMLGGRFLMIIPMLAIAGNLAKKKYVPASAGTFPVTTPLFSVLLIGTIIIIGALTFFPALSLGPILEHLQMHAGKAF.

The next 10 membrane-spanning stretches (helical) occupy residues 6–26 (WFQILLFLGLILAVTKPLGVF), 63–83 (WTEYAIAMLLFSAVSMLMLYI), 137–157 (GLAYHNFMSAAVGIAIAIAFI), 179–199 (VLWVLLPFCIMGALALVSQGV), 272–292 (LSNLIEMFSIFAISAGLTYTL), 303–323 (WAVWGAMAALFLVGVSVVYWA), 405–425 (AGMYGMLIYIVLAVFIAGLMV), 444–464 (AMLVALIFPLIILVFSAISSV), 510–530 (VAIGIAMLGGRFLMIIPMLAI), and 553–573 (LFSVLLIGTIIIIGALTFFPA).

The protein belongs to the KdpA family. As to quaternary structure, the system is composed of three essential subunits: KdpA, KdpB and KdpC.

Its subcellular location is the cell inner membrane. Its function is as follows. Part of the high-affinity ATP-driven potassium transport (or Kdp) system, which catalyzes the hydrolysis of ATP coupled with the electrogenic transport of potassium into the cytoplasm. This subunit binds the periplasmic potassium ions and delivers the ions to the membrane domain of KdpB through an intramembrane tunnel. This Koribacter versatilis (strain Ellin345) protein is Potassium-transporting ATPase potassium-binding subunit.